Here is a 720-residue protein sequence, read N- to C-terminus: ATP-dependent DNA helicase Hel308 (720 aa).

Residues Ser23, Gln28, and Ile46–Thr53 contribute to the ATP site. The 165-residue stretch at Lys33 to Asp197 folds into the Helicase ATP-binding domain. Residues Asp145–His148 carry the DEAH box motif. The Helicase C-terminal domain maps to Leu229–Ile422.

It belongs to the helicase family. Hel308 subfamily. Monomer. Interacts with PCNA. It depends on Mg(2+) as a cofactor. Zn(2+) serves as cofactor.

It carries out the reaction Couples ATP hydrolysis with the unwinding of duplex DNA by translocating in the 3'-5' direction.. The catalysed reaction is ATP + H2O = ADP + phosphate + H(+). Functionally, DNA-dependent ATPase and 3'-5' DNA helicase that may be involved in repair of stalled replication forks. Unwinds the lagging strand from forked DNA structures in a 3'-5' direction. PCNA, the DNA polymerase sliding clamp subunit, stimulates the helicase activity, and may alter substrate specificity. Unwinds branched DNA (Holliday junctions) in an ATP-dependent fashion; ss- and dsDNA stimulate ATPase to the greatest extent, although it preferentially binds DNA with a single-stranded region. Processes a RecA-mediated recombination intermediate between gapped circular and homologous linear dsDNA. The polypeptide is ATP-dependent DNA helicase Hel308 (Pyrococcus furiosus (strain ATCC 43587 / DSM 3638 / JCM 8422 / Vc1)).